Reading from the N-terminus, the 862-residue chain is Probable inorganic carbon transporter subunit DabA (862 aa).

Zn(2+) contacts are provided by Cys365, Asp367, His540, and Cys555.

It belongs to the inorganic carbon transporter (TC 9.A.2) DabA family. Forms a complex with DabB. Requires Zn(2+) as cofactor.

The protein localises to the cell inner membrane. Its function is as follows. Part of an energy-coupled inorganic carbon pump. In Vibrio cholerae serotype O1 (strain ATCC 39315 / El Tor Inaba N16961), this protein is Probable inorganic carbon transporter subunit DabA.